The primary structure comprises 85 residues: MSAENISTGSPTGKQPSSEVNLGEREAGTKNERMMRQTKLLKDTLDLLWNKTLEQQEVCEQLKQENDYLEDYIGNLMRSSNVLEK.

The segment covering 1 to 20 has biased composition (polar residues); the sequence is MSAENISTGSPTGKQPSSEV. The tract at residues 1-34 is disordered; it reads MSAENISTGSPTGKQPSSEVNLGEREAGTKNERM. Ser2 is modified (N-acetylserine). Phosphoserine is present on Ser10. The segment covering 22-34 has biased composition (basic and acidic residues); it reads LGEREAGTKNERM.

It belongs to the SLO1 family. Interacts with ARL3.

This Saccharomyces cerevisiae (strain ATCC 204508 / S288c) (Baker's yeast) protein is SCOCO-like protein 1 (SLO1).